Consider the following 105-residue polypeptide: Pyruvate synthase subunit PorD (105 aa).

2 consecutive 4Fe-4S ferredoxin-type domains span residues 44-73 (FKPE…LDEE) and 74-103 (GYPV…MVRE). 8 residues coordinate [4Fe-4S] cluster: Cys-53, Cys-56, Cys-59, Cys-63, Cys-83, Cys-86, Cys-89, and Cys-93.

Heterotetramer of one alpha, one beta, one delta and one gamma chain. Requires [4Fe-4S] cluster as cofactor.

The protein is Pyruvate synthase subunit PorD (porD) of Pyrococcus horikoshii (strain ATCC 700860 / DSM 12428 / JCM 9974 / NBRC 100139 / OT-3).